We begin with the raw amino-acid sequence, 129 residues long: Fluoride-specific ion channel FluC 2 (129 aa).

4 helical membrane-spanning segments follow: residues 9–29, 37–57, 74–94, and 100–120; these read LGTLISVFFFGMIGGTLRYLL, GTILVNLIGSFCLAFLTYYVI, MVGAFTTFSTFTVDILGLSTF, and YLLISVVGGFLLAYTGMILGI. The Na(+) site is built by Gly-76 and Thr-79.

This sequence belongs to the fluoride channel Fluc/FEX (TC 1.A.43) family.

It localises to the cell membrane. It catalyses the reaction fluoride(in) = fluoride(out). With respect to regulation, na(+) is not transported, but it plays an essential structural role and its presence is essential for fluoride channel function. Fluoride-specific ion channel. Important for reducing fluoride concentration in the cell, thus reducing its toxicity. The chain is Fluoride-specific ion channel FluC 2 from Ligilactobacillus salivarius (strain UCC118) (Lactobacillus salivarius).